We begin with the raw amino-acid sequence, 982 residues long: E3 ubiquitin-protein ligase CBL-B (982 aa).

The interval 35–167 (PPKQAAADRR…KAIFPNGQFQ (133 aa)) is 4H. Positions 35–343 (PPKQAAADRR…GRSYNPDLTG (309 aa)) constitute a Cbl-PTB domain. The segment at 168 to 240 (GDNFRITKAD…FEFDIFTRLF (73 aa)) is EF-hand-like. Positions 221, 223, 225, 227, and 232 each coordinate Ca(2+). Positions 241 to 343 (QPWGSILRNW…GRSYNPDLTG (103 aa)) are SH2-like. Serine 282 carries the phosphoserine; by PKC/PRKCQ modification. Arginine 286 lines the 4-O-phospho-L-tyrosine pocket. The linker stretch occupies residues 344 to 372 (LCEPTPHDHIKVTQEQYELYCEMGSTFQL). Tyrosine 363 carries the phosphotyrosine modification. The RING-type zinc-finger motif lies at 373 to 412 (CKICAENDKDVKIEPCGHLMCTSCLTAWQESDGQGCPFCR). The segment at 466–571 (NVRKCTDRQN…PPPIPPDNRL (106 aa)) is disordered. Positions 473 to 486 (RQNSPVTSPGSSPL) are enriched in polar residues. Phosphoserine is present on residues serine 476, serine 480, serine 484, serine 521, serine 525, and serine 529. Residues 543–568 (PLPAPPPPLRDPPPPPPERPPPIPPD) are interaction with VAV1. Positions 544–567 (LPAPPPPLRDPPPPPPERPPPIPP) are enriched in pro residues. Phosphoserine is present on serine 634. Tyrosine 665 and tyrosine 709 each carry phosphotyrosine. Disordered regions lie at residues 688 to 731 (GPLA…NVKP) and 769 to 929 (FDSA…EAAL). The segment covering 715–725 (HPVSLNSQPSH) has biased composition (polar residues). Residues 819–828 (PSLPPPPPPA) are compositionally biased toward pro residues. The span at 838–848 (PPGSSSRPSSG) shows a compositional bias: low complexity. Over residues 880-899 (VKTNRTSQDYDQLPSCSDGS) the composition is skewed to polar residues. The residue at position 889 (tyrosine 889) is a Phosphotyrosine. Residues 891–927 (QLPSCSDGSQAPARPPKPRPRRTAPEIHHRKPHGPEA) form an interaction with SH3KBP1 region. A compositionally biased stretch (basic residues) spans 906-922 (PKPRPRRTAPEIHHRKP). The UBA domain occupies 931–970 (NVDAKIAKLMGEGYAFEEVKRALEIAQNNVEVARSILREF).

Interacts with SH3 domain-containing proteins LCK, CRK and SORBS1. Interacts with LCP2 and ZAP70. Interacts with CBL. Interacts with SH3 domain-containing proteins VAV1, FYN, FGR, PLCG1, GRB2, CRKL, PIK3R1 and SH3KBP1/CIN85. Identified in heterotrimeric complexes with SH3KBP1/CIN85, CD2AP and ARHGEF7, where one CBLB peptide binds two copies of the other protein. Interacts with poly-ubiquitinated proteins. Dimerization is required for the binding of poly-ubiquitin, but not for the binding of mono-ubiquitin. Interacts with EGFR (phosphorylated). Interacts with IFT20. Post-translationally, phosphorylated on tyrosine and serine residues upon TCR or BCR activation, and upon various types of cell stimulation. Auto-ubiquitinated upon EGF-mediated cell activation or upon T-cell costimulation by CD28; which promotes proteasomal degradation. In terms of tissue distribution, expressed in placenta, heart, lung, kidney, spleen, ovary and testis, as well as fetal brain and liver and hematopoietic cell lines, but not in adult brain, liver, pancreas, salivary gland, or skeletal muscle. Present in lymphocytes (at protein level).

The protein localises to the cytoplasm. It carries out the reaction S-ubiquitinyl-[E2 ubiquitin-conjugating enzyme]-L-cysteine + [acceptor protein]-L-lysine = [E2 ubiquitin-conjugating enzyme]-L-cysteine + N(6)-ubiquitinyl-[acceptor protein]-L-lysine.. The protein operates within protein modification; protein ubiquitination. Functionally, E3 ubiquitin-protein ligase which accepts ubiquitin from specific E2 ubiquitin-conjugating enzymes, and transfers it to substrates, generally promoting their degradation by the proteasome. Negatively regulates TCR (T-cell receptor), BCR (B-cell receptor) and FCER1 (high affinity immunoglobulin epsilon receptor) signal transduction pathways. In naive T-cells, inhibits VAV1 activation upon TCR engagement and imposes a requirement for CD28 costimulation for proliferation and IL-2 production. Also acts by promoting PIK3R1/p85 ubiquitination, which impairs its recruitment to the TCR and subsequent activation. In activated T-cells, inhibits PLCG1 activation and calcium mobilization upon restimulation and promotes anergy. In B-cells, acts by ubiquitinating SYK and promoting its proteasomal degradation. Slightly promotes SRC ubiquitination. May be involved in EGFR ubiquitination and internalization. May be functionally coupled with the E2 ubiquitin-protein ligase UB2D3. In association with CBL, required for proper feedback inhibition of ciliary platelet-derived growth factor receptor-alpha (PDGFRA) signaling pathway via ubiquitination and internalization of PDGFRA. This is E3 ubiquitin-protein ligase CBL-B (CBLB) from Homo sapiens (Human).